A 20-amino-acid chain; its full sequence is Equinatoxin-3 (20 aa).

The segment at 3 to 12 is plays an important role in the hemolytic activity; the sequence is AVAGAIIKGA. The N-terminal region stretch occupies residues 11–20; the sequence is GAALTFNVLQ.

The protein belongs to the actinoporin family. Sea anemone subfamily. In terms of assembly, octamer or nonamer in membranes. Monomer in the soluble state.

It localises to the secreted. It is found in the nematocyst. The protein localises to the target cell membrane. In terms of biological role, pore-forming protein that forms cations-selective hydrophilic pores of around 1 nm and causes cardiac stimulation and cytolysis. Pore formation is a multi-step process that involves specific recognition of membrane sphingomyelin (but neither cholesterol nor phosphatidylcholine) using aromatic rich region and adjacent phosphocholine (POC) binding site, firm binding to the membrane (mainly driven by hydrophobic interactions) accompanied by the transfer of the N-terminal region to the lipid-water interface and finally pore formation after oligomerization of monomers. Cytolytic effects include red blood cells hemolysis, platelet aggregation and lysis, cytotoxic and cytostatic effects on fibroblasts. Lethality in mammals has been ascribed to severe vasospasm of coronary vessels, cardiac arrhythmia, and inotropic effects. This Actinia equina (Beadlet anemone) protein is Equinatoxin-3.